The sequence spans 276 residues: Ribosomal RNA small subunit methyltransferase J (276 aa).

S-adenosyl-L-methionine is bound by residues 135–136 and Asp191; that span reads ER.

It belongs to the methyltransferase superfamily. RsmJ family.

The protein resides in the cytoplasm. It catalyses the reaction guanosine(1516) in 16S rRNA + S-adenosyl-L-methionine = N(2)-methylguanosine(1516) in 16S rRNA + S-adenosyl-L-homocysteine + H(+). Specifically methylates the guanosine in position 1516 of 16S rRNA. The polypeptide is Ribosomal RNA small subunit methyltransferase J (Hydrogenovibrio crunogenus (strain DSM 25203 / XCL-2) (Thiomicrospira crunogena)).